Here is a 467-residue protein sequence, read N- to C-terminus: Variant surface glycoprotein 7 (467 aa).

The span at 77 to 87 shows a compositional bias: polar residues; that stretch reads TIAAGATNTKL. The interval 77–133 is disordered; it reads TIAAGATNTKLSGHHPNQGRRGRRRSSSARPNNSKGNSPSKRAGGAVRGETPASGRL. Residues 93 to 103 are compositionally biased toward basic residues; it reads NQGRRGRRRSS. Residues 107-116 are compositionally biased toward polar residues; sequence PNNSKGNSPS. Asparagine 108 and asparagine 252 each carry an N-linked (GlcNAc...) asparagine glycan. A disordered region spans residues 382-407; it reads AEKVENPRSQGNPETAENKKEGGNTA. The N-linked (GlcNAc...) asparagine glycan is linked to asparagine 416. Aspartate 444 carries GPI-anchor amidated aspartate lipidation. The propeptide at 445-467 is removed in mature form; sequence SSFLLSKQFALSVVSAAFAALLF.

Its subcellular location is the cell membrane. In terms of biological role, VSG forms a coat on the surface of the parasite. The trypanosome evades the immune response of the host by expressing a series of antigenically distinct VSGs from an estimated 1000 VSG genes. This is Variant surface glycoprotein 7 from Trypanosoma brucei rhodesiense.